A 474-amino-acid polypeptide reads, in one-letter code: MTVKTRFAPSPTGYLHVGGARTALYSWLFAKNQGGEFVLRIEDTDLERNSQEAVDAIIEGMHWMGMEWDEGPYYQSKRFDRYNEVVDQLLAEDKAYKCYASKELLDEIRAEQEANKEMARYDANHPKIVAANAAAKEGDACVIRFRNPKEGSVVFDDQIRGRIEISNSQLDDLIIRRTDGAPTYNFVVVVDDWDMGITQVIRGEDHINNTPRQINIYEALGAPVPMFAHCAMILGDDGAKLSKRHGAVSVMQYRDEGYLPNALNNYLVRLGWSHGDQEIFSQEEMINLFSLSAVSKSASAFNTDKLLWLNNHYIKSSEPEYVAKYLQWHLDQKEISLDNGPAITEVIKLVGERCNTLIELADQSRYFYQDFEEFEAGAAKKHLRGVAKGPLELALAKVEALEEWTTENLHNVIEEVCAELEIGMGKIGMPLRVAVTGGGQSPSVDAVMQLVGKERVVARIKMALAFIAEREANA.

A 'HIGH' region motif is present at residues Pro9–Gly19. The 'KMSKS' region signature appears at Lys240–Arg244. ATP is bound at residue Lys243.

Belongs to the class-I aminoacyl-tRNA synthetase family. Glutamate--tRNA ligase type 1 subfamily. As to quaternary structure, monomer.

Its subcellular location is the cytoplasm. It carries out the reaction tRNA(Glu) + L-glutamate + ATP = L-glutamyl-tRNA(Glu) + AMP + diphosphate. Functionally, catalyzes the attachment of glutamate to tRNA(Glu) in a two-step reaction: glutamate is first activated by ATP to form Glu-AMP and then transferred to the acceptor end of tRNA(Glu). This Aliivibrio fischeri (strain ATCC 700601 / ES114) (Vibrio fischeri) protein is Glutamate--tRNA ligase.